A 388-amino-acid chain; its full sequence is Deoxyuridine 5'-triphosphate nucleotidohydrolase (388 aa).

Residues 77–88 (EEKYDKEQHPGE) show a composition bias toward basic and acidic residues. 2 disordered regions span residues 77 to 96 (EEKYDKEQHPGEDEASSPLP) and 336 to 388 (THTP…PRHP). The span at 351–363 (VDDDVDETEEDEK) shows a compositional bias: acidic residues.

The protein belongs to the dUTPase family. It depends on Mg(2+) as a cofactor.

It localises to the virion. It catalyses the reaction dUTP + H2O = dUMP + diphosphate + H(+). It participates in pyrimidine metabolism; dUMP biosynthesis; dUMP from dCTP (dUTP route): step 2/2. Involved in nucleotide metabolism: produces dUMP, the immediate precursor of thymidine nucleotides and decreases the intracellular concentration of dUTP to avoid uracil incorporation into viral DNA. The polypeptide is Deoxyuridine 5'-triphosphate nucleotidohydrolase (Human cytomegalovirus (strain AD169) (HHV-5)).